The chain runs to 312 residues: Ribosomal protein L11 methyltransferase (312 aa).

Residues Thr-162, Gly-183, Asp-205, and Asn-248 each contribute to the S-adenosyl-L-methionine site.

This sequence belongs to the methyltransferase superfamily. PrmA family.

The protein resides in the cytoplasm. The enzyme catalyses L-lysyl-[protein] + 3 S-adenosyl-L-methionine = N(6),N(6),N(6)-trimethyl-L-lysyl-[protein] + 3 S-adenosyl-L-homocysteine + 3 H(+). In terms of biological role, methylates ribosomal protein L11. This Geobacillus kaustophilus (strain HTA426) protein is Ribosomal protein L11 methyltransferase.